Here is an 812-residue protein sequence, read N- to C-terminus: Valine--tRNA ligase (812 aa).

The 'HIGH' region signature appears at 46–56 (PTVSGQLHIGH). Residues 536–540 (KMSKS) carry the 'KMSKS' region motif. Lysine 539 is an ATP binding site.

This sequence belongs to the class-I aminoacyl-tRNA synthetase family. ValS type 2 subfamily. As to quaternary structure, monomer.

It is found in the cytoplasm. It carries out the reaction tRNA(Val) + L-valine + ATP = L-valyl-tRNA(Val) + AMP + diphosphate. Its function is as follows. Catalyzes the attachment of valine to tRNA(Val). As ValRS can inadvertently accommodate and process structurally similar amino acids such as threonine, to avoid such errors, it has a 'posttransfer' editing activity that hydrolyzes mischarged Thr-tRNA(Val) in a tRNA-dependent manner. The chain is Valine--tRNA ligase from Rickettsia rickettsii (strain Iowa).